A 137-amino-acid polypeptide reads, in one-letter code: MVEDSFLTDTQIKVLKLRKKGLTQEEIAKMLGTSRANISMIEKRAKENIKKAYNTIKIYNRIMAPLSIEIEEGTDVLEIPDIVFKKADEEGIKVKYNTLELIELIKENASEFIEKRTVKKKFKIYILENGDLDVGGS.

Belongs to the Tfx family.

Putative transcriptional regulator. In Methanocaldococcus jannaschii (strain ATCC 43067 / DSM 2661 / JAL-1 / JCM 10045 / NBRC 100440) (Methanococcus jannaschii), this protein is Putative transcriptional regulatory protein MJ0173.